The following is a 739-amino-acid chain: Protein kinase C (739 aa).

The C2 domain maps to 1-117; sequence MFTGKLQIKV…SETAVQDLWV (117 aa). 2 Phorbol-ester/DAG-type zinc fingers span residues 176–226 and 251–301; these read GHKF…VSKC and PHRF…ANTC. A Protein kinase domain is found at 408–665; that stretch reads FNFIKVLGKG…ENEIRKHPFF (258 aa). ATP contacts are provided by residues 414 to 422 and Lys-437; that span reads LGKGSFGKV. Asp-532 functions as the Proton acceptor in the catalytic mechanism. The AGC-kinase C-terminal domain maps to 666–737; sequence AKLDWKELEK…VNPKFGPERK (72 aa).

Belongs to the protein kinase superfamily. AGC Ser/Thr protein kinase family. PKC subfamily.

It carries out the reaction L-seryl-[protein] + ATP = O-phospho-L-seryl-[protein] + ADP + H(+). It catalyses the reaction L-threonyl-[protein] + ATP = O-phospho-L-threonyl-[protein] + ADP + H(+). Its function is as follows. PKC is activated by diacylglycerol which in turn phosphorylates a range of cellular proteins. PKC also serves as the receptor for phorbol esters, a class of tumor promoters. The chain is Protein kinase C (Pkc98E) from Drosophila melanogaster (Fruit fly).